We begin with the raw amino-acid sequence, 394 residues long: Magnesium transporter MRS2-2 (394 aa).

Residues 115–145 (PVGNASHNGGQGDGKEIAGAQNDGDTGDEDE) form a disordered region. 2 consecutive transmembrane segments (helical) span residues 329–349 (LVLS…GIFG) and 366–386 (YVVG…MSYA). Residues 349 to 351 (GMN) carry the Required for magnesium transport activity motif.

This sequence belongs to the CorA metal ion transporter (MIT) (TC 1.A.35.5) family. In terms of tissue distribution, expressed in the whole plant but preferentially in the mature anthers.

It is found in the membrane. Low-affinity magnesium transporter that mediates the influx of magnesium. Plays a crucial role in male gametophyte development and male fertility. This is Magnesium transporter MRS2-2 (MRS2-2) from Arabidopsis thaliana (Mouse-ear cress).